Consider the following 359-residue polypeptide: Peptide chain release factor 1 (359 aa).

The residue at position 236 (Gln-236) is an N5-methylglutamine.

The protein belongs to the prokaryotic/mitochondrial release factor family. Methylated by PrmC. Methylation increases the termination efficiency of RF1.

It is found in the cytoplasm. Peptide chain release factor 1 directs the termination of translation in response to the peptide chain termination codons UAG and UAA. This is Peptide chain release factor 1 from Streptococcus pneumoniae serotype 19F (strain G54).